We begin with the raw amino-acid sequence, 815 residues long: Cell division control protein 48 homolog D (815 aa).

A2 carries the N-acetylalanine modification. S42 is subject to Phosphoserine. ATP contacts are provided by residues 249-256 and 522-529; these read GPPGSGKT and GPPGCGKT. At S720 the chain carries Phosphoserine. Positions 772 to 815 are disordered; sequence GSEFRFPDAPTGTTGAFPGAAATVGGVDPFATSGGAADDDDLYS. Residues 780–798 are compositionally biased toward low complexity; sequence APTGTTGAFPGAAATVGGV.

Belongs to the AAA ATPase family.

The protein localises to the nucleus. It is found in the cytoplasm. Its subcellular location is the cytoskeleton. The protein resides in the phragmoplast. Functionally, probably functions in cell division and growth processes. Interacts with certain SNAREs as part of specialized membrane fusion events where vesicles from the same organelle fuse (homotypic fusion). The polypeptide is Cell division control protein 48 homolog D (CDC48D) (Arabidopsis thaliana (Mouse-ear cress)).